The chain runs to 709 residues: ATP-dependent zinc metalloprotease FtsH (709 aa).

Residues 1–25 (MKKNKGLNEATTSEKPQFPKRTAWK) lie on the Cytoplasmic side of the membrane. A helical transmembrane segment spans residues 26–46 (IFWWVVILAIIIGILVYILMP). Residues 47-171 (RATTAVIEKW…FVAPDTRARD (125 aa)) are Extracellular-facing. Residues 172 to 192 (VLNIFFGLLPIIIFVIFFLLF) form a helical membrane-spanning segment. At 193–709 (WRSARGISGG…DTEKDSETNS (517 aa)) the chain is on the cytoplasmic side. 268-275 (GPPGTGKT) contacts ATP. Zn(2+) is bound at residue His490. Glu491 is an active-site residue. Zn(2+)-binding residues include His494 and Asp569. The interval 673-709 (ILAQKQEQQAKQKAEAKEAKLNKKTEKDTEKDSETNS) is disordered. Over residues 680-709 (QQAKQKAEAKEAKLNKKTEKDTEKDSETNS) the composition is skewed to basic and acidic residues.

The protein in the central section; belongs to the AAA ATPase family. This sequence in the C-terminal section; belongs to the peptidase M41 family. Homohexamer. Requires Zn(2+) as cofactor.

Its subcellular location is the cell membrane. Acts as a processive, ATP-dependent zinc metallopeptidase for both cytoplasmic and membrane proteins. Plays a role in the quality control of integral membrane proteins. The chain is ATP-dependent zinc metalloprotease FtsH from Mycoplasma pneumoniae (strain ATCC 29342 / M129 / Subtype 1) (Mycoplasmoides pneumoniae).